Reading from the N-terminus, the 1416-residue chain is Tiny macrocysts protein B (1416 aa).

8 helical membrane passes run 47–67 (ILTI…GFKH), 93–113 (FGYL…ILGF), 140–160 (FVSF…LIGL), 185–205 (ANLP…IVAF), 231–251 (VTVL…DFVP), 253–273 (LTSI…IIVL), 285–305 (SGFY…MGIN), and 315–335 (ITIV…MFYF). The segment covering 356 to 372 (LKDANKKGKRNSVEKES) has biased composition (basic and acidic residues). Disordered stretches follow at residues 356–377 (LKDA…PTSK) and 662–691 (IEKS…RRGK). Helical transmembrane passes span 706–726 (WLMI…LVVF) and 953–973 (AILY…AVLF). 2 disordered regions span residues 1018 to 1103 (RDNL…RPLM) and 1119 to 1144 (NVRL…ATRT). The segment covering 1024 to 1039 (TTDDDGRDDHLGEDDN) has biased composition (acidic residues). 2 stretches are compositionally biased toward low complexity: residues 1048–1062 (NNNN…NNNN) and 1083–1094 (SSSGSNVLNTSS). The segment covering 1123 to 1144 (QAKDEEITNGGGERKGSDATRT) has biased composition (basic and acidic residues). Transmembrane regions (helical) follow at residues 1179-1199 (ILAT…TFTV), 1325-1345 (WFLA…FTYF), and 1358-1378 (VLTA…VVLF).

It localises to the membrane. Its function is as follows. Regulator of the cAMP signaling pathway specific to sexual development. Controls the levels of external cAMP by regulating the expression of phosphodiesterase pdsA and its inhibitor pdiA. The polypeptide is Tiny macrocysts protein B (tmcB) (Dictyostelium discoideum (Social amoeba)).